A 416-amino-acid polypeptide reads, in one-letter code: Solute carrier family 25 member 46 (416 aa).

The span at 1–13 (MQPRRPDRFDGLE) shows a compositional bias: basic and acidic residues. The segment at 1 to 91 (MQPRRPDRFD…GEESSSSSSG (91 aa)) is disordered. Residues 37–49 (SFSSSGDLSQHWV) are compositionally biased toward polar residues. Positions 82-91 (GEESSSSSSG) are enriched in low complexity. The Solcar 1 repeat unit spans residues 94-185 (HLNRFAGFGI…GMLSEFTHLP (92 aa)). Helical transmembrane passes span 101 to 121 (FGIG…CIVL), 161 to 181 (MGST…LSEF), 197 to 217 (IGGH…FYSA), 256 to 276 (LLPL…HYII), 312 to 332 (FPEL…LYPL), and 381 to 401 (LGFY…AIVL). Residues 309 to 414 (EDYFPELIAN…KIIYSSVVQT (106 aa)) form a Solcar 2 repeat.

Belongs to the mitochondrial carrier (TC 2.A.29) family.

Its subcellular location is the mitochondrion outer membrane. In terms of biological role, may play a role in mitochondrial dynamics by controlling mitochondrial membrane fission. This Xenopus tropicalis (Western clawed frog) protein is Solute carrier family 25 member 46 (slc25a46).